The chain runs to 188 residues: Multiple organellar RNA editing factor 7, mitochondrial (188 aa).

Residues 1–20 constitute a mitochondrion transit peptide; sequence MARIIRRPLNLTAAVRFRLS. The disordered stretch occupies residues 169–188; the sequence is DAKSGVVKKKHRRKRKKKLI. The segment covering 174–188 has biased composition (basic residues); that stretch reads VVKKKHRRKRKKKLI.

This sequence belongs to the MORF family. In terms of assembly, heterodimers with MORF8/RIP1, MORF5/RIP5 and MORF6/RIP6.

It localises to the mitochondrion. Involved in organellar RNA editing. Required for the processing of few RNA editing sites in mitochondria. The sequence is that of Multiple organellar RNA editing factor 7, mitochondrial from Arabidopsis thaliana (Mouse-ear cress).